The chain runs to 150 residues: UPF0756 membrane protein NTHI1233 (150 aa).

4 consecutive transmembrane segments (helical) span residues 1–21, 52–72, 81–101, and 123–143; these read MTLQ…LGVL, YGVK…LVSG, GFLS…AWLA, and IIGV…AGIL.

The protein belongs to the UPF0756 family.

The protein localises to the cell membrane. This Haemophilus influenzae (strain 86-028NP) protein is UPF0756 membrane protein NTHI1233.